Reading from the N-terminus, the 239-residue chain is MQLMQVQNLSKCYRNGDGVEHLSFSIQRGEIVALLGPNGAGKTTTIRCLTGLYKPDKGDILIEGSPPGDINVQKKVALIPDQPYLYPALTAAEHIQFRARGYHPGKKDVKERVYHALKEVHLEEKANQLCGQLSRGQKQRVVLAGAIVQDALLYILDEPTVGLDIPSKQWLSNWLKTKTDQGCSAFVSTHSLEFVIETADRVILIRDGKLMQDLYVPQFEEQAEWRKEVIRLLGEWSDE.

The region spanning 4–232 is the ABC transporter domain; the sequence is MQVQNLSKCY…AEWRKEVIRL (229 aa). 36 to 43 provides a ligand contact to ATP; sequence GPNGAGKT.

This sequence belongs to the ABC transporter superfamily. SkfA peptide export (TC 3.A.1.128.1) family.

It is found in the cell membrane. It catalyses the reaction sulfate(out) + ATP + H2O = sulfate(in) + ADP + phosphate + H(+). The catalysed reaction is thiosulfate(out) + ATP + H2O = thiosulfate(in) + ADP + phosphate + H(+). In terms of biological role, probably part of the ABC transporter SkfEF involved in the export of the bacteriocin SKF. Probably responsible for energy coupling to the transport system. This Bacillus subtilis (strain 168) protein is SkfA peptide export ATP-binding protein SkfE.